Here is an 84-residue protein sequence, read N- to C-terminus: Mu-conotoxin-like Cal 12.2a (84 aa).

An N-terminal signal peptide occupies residues 1–19; it reads MKLTCVLVVLLLVLPFGDL. Residues 20-42 constitute a propeptide that is removed on maturation; the sequence is ITTSNTEDNKRGATPWQNSLKAR. 4 disulfides stabilise this stretch: Cys-45–Cys-57, Cys-52–Cys-65, Cys-59–Cys-70, and Cys-64–Cys-76. The residue at position 48 (Pro-48) is a 4-hydroxyproline. Trp-72 bears the 6'-bromotryptophan mark. Pro-77 is modified (4-hydroxyproline). A 6'-bromotryptophan modification is found at Trp-81.

This sequence belongs to the conotoxin O1 superfamily. In terms of tissue distribution, expressed by the venom duct.

The protein localises to the secreted. Mu-conotoxins block voltage-gated sodium channels. This toxin reversibly blocks voltage-gated sodium channel in cephalopods, with no alteration in the voltage dependence of sodium conductance or on the kinetics of inactivation. The polypeptide is Mu-conotoxin-like Cal 12.2a (Californiconus californicus (California cone)).